The following is a 370-amino-acid chain: Actin-related protein 2/3 complex subunit 1A (370 aa).

WD repeat units lie at residues 6-45, 50-89, 140-179, 202-241, 244-284, and 322-365; these read FLLE…WTKA, EHNG…WKPT, PIRS…VDEK, GTGG…QVST, TEFL…TFVS, and LHQN…SSIQ.

This sequence belongs to the WD repeat ARPC1 family. Probable component of the Arp2/3 complex in which it may replace ARPC1B.

It localises to the cytoplasm. The protein localises to the cytoskeleton. It is found in the nucleus. Functionally, probably functions as a component of the Arp2/3 complex which is involved in regulation of actin polymerization and together with an activating nucleation-promoting factor (NPF) mediates the formation of branched actin networks. In addition to its role in the cytoplasmic cytoskeleton, the Arp2/3 complex also promotes actin polymerization in the nucleus, thereby regulating gene transcription and repair of damaged DNA. This is Actin-related protein 2/3 complex subunit 1A (Arpc1a) from Rattus norvegicus (Rat).